The following is a 723-amino-acid chain: MSPPKNCAVCGDKALGYNFNAVTCESCKAFFRRNALAKKQFTCPFNQNCDITVVTRRFCQKCRLRKCLDIGMKSENIMSEEDKLIKRRKIETNRAKRRLMENGTDACDADGGEERDHKAPADSSSSNLDHYSGSQDSQSCGSADSGANGCSGRQASSPGTQVNPLQMTAEKIVDQIVSDPDRASQAINRLMRTQKEAISVMEKVISSQKDALRLVSHLIDYPGDALKIISKFMNSPFNALTVFTKFMSSPTDGVEIISKIVDSPADVVEFMQNLMHSPEDAIDIMNKFMNTPAEALRILNRILSGGGANAAQQTADRKPLLDKEPAVKPAAPAERADTVIQSMLGNSPPISPHDAAVDLQYHSPGVGEQPSTSSSHPLPYIANSPDFDLKTFMQTNYNDEPSLDSDFSINSIESVLSEVIRIEYQAFNSIQQAASRVKEEMSYGTQSTYGGCNSAANNSQPHLQQPICAPSTQQLDRELNEAEQMKLRELRLASEALYDPVDEDLSALMMGDDRIKPDDTRHNPKLLQLINLTAVAIKRLIKMAKKITAFRDMCQEDQVALLKGGCTEMMIMRSVMIYDDDRAAWKVPHTKENMGNIRTDLLKFAEGNIYEEHQKFITTFDEKWRMDENIILIMCAIVLFTSARSRVIHKDVIRLEQNSYYYLLRRYLESVYSGCEARNAFIKLIQKISDVERLNKFIINVYLNVNPSQVEPLLREIFDLKNH.

Positions 4 to 79 (PKNCAVCGDK…IGMKSENIMS (76 aa)) form a DNA-binding region, nuclear receptor. 2 NR C4-type zinc fingers span residues 7 to 27 (CAVC…CESC) and 43 to 67 (CPFN…LRKC). Residues 95–163 (AKRRLMENGT…QASSPGTQVN (69 aa)) are disordered. Composition is skewed to polar residues over residues 122 to 142 (DSSS…SCGS) and 151 to 163 (SGRQ…TQVN). In terms of domain architecture, NR LBD spans 483–723 (EQMKLRELRL…LREIFDLKNH (241 aa)).

The protein belongs to the nuclear hormone receptor family. NR1 subfamily.

Its subcellular location is the nucleus. Binds selectively to the HSP27 20E response element. The polypeptide is Nuclear hormone receptor HR96 (Hr96) (Drosophila melanogaster (Fruit fly)).